The primary structure comprises 166 residues: MRLLVAEAASPLSSAATPTCNSHTCRWKPYSNSTDFTANASVLLILVISALICALSLYAAIRCFLRPTLETEDDHKPDPEAAASSTPTTPTLVYSSDLELAGAEAECAICLSEFEQGESIQVLEKCQHGFHVKCIHKWLSTRSSCPTCRTSIFSQHSETPSSHINA.

A signal peptide spans 1 to 16; that stretch reads MRLLVAEAASPLSSAA. The chain crosses the membrane as a helical span at residues 41 to 61; the sequence is SVLLILVISALICALSLYAAI. Residues 71–90 are disordered; that stretch reads TEDDHKPDPEAAASSTPTTP. Over residues 81-90 the composition is skewed to low complexity; that stretch reads AAASSTPTTP. The RING-type; atypical zinc-finger motif lies at 107–149; the sequence is CAICLSEFEQGESIQVLEKCQHGFHVKCIHKWLSTRSSCPTCR.

Belongs to the RING-type zinc finger family. ATL subfamily.

The protein localises to the membrane. It catalyses the reaction S-ubiquitinyl-[E2 ubiquitin-conjugating enzyme]-L-cysteine + [acceptor protein]-L-lysine = [E2 ubiquitin-conjugating enzyme]-L-cysteine + N(6)-ubiquitinyl-[acceptor protein]-L-lysine.. It functions in the pathway protein modification; protein ubiquitination. This Arabidopsis thaliana (Mouse-ear cress) protein is RING-H2 finger protein ATL79 (ATL79).